A 458-amino-acid chain; its full sequence is UDP-N-acetylmuramate--L-alanine ligase (458 aa).

112–118 (GTHGKTT) lines the ATP pocket.

The protein belongs to the MurCDEF family.

It is found in the cytoplasm. It catalyses the reaction UDP-N-acetyl-alpha-D-muramate + L-alanine + ATP = UDP-N-acetyl-alpha-D-muramoyl-L-alanine + ADP + phosphate + H(+). It functions in the pathway cell wall biogenesis; peptidoglycan biosynthesis. Cell wall formation. The chain is UDP-N-acetylmuramate--L-alanine ligase from Geotalea daltonii (strain DSM 22248 / JCM 15807 / FRC-32) (Geobacter daltonii).